The chain runs to 599 residues: Elongation factor 4 (599 aa).

In terms of domain architecture, tr-type G spans 5–187; it reads STIRNFAIIA…AIVHRLPAPV (183 aa). GTP is bound by residues 17-22 and 134-137; these read DHGKST and NKAD.

It belongs to the TRAFAC class translation factor GTPase superfamily. Classic translation factor GTPase family. LepA subfamily.

The protein resides in the cell inner membrane. The enzyme catalyses GTP + H2O = GDP + phosphate + H(+). Required for accurate and efficient protein synthesis under certain stress conditions. May act as a fidelity factor of the translation reaction, by catalyzing a one-codon backward translocation of tRNAs on improperly translocated ribosomes. Back-translocation proceeds from a post-translocation (POST) complex to a pre-translocation (PRE) complex, thus giving elongation factor G a second chance to translocate the tRNAs correctly. Binds to ribosomes in a GTP-dependent manner. This Anaplasma marginale (strain Florida) protein is Elongation factor 4.